A 628-amino-acid chain; its full sequence is RING finger protein 112 (628 aa).

The segment at 57-98 (CSICLERPREPISLDCGHDFCPRCFSTHRVPGCGPPCCPECR) adopts an RING-type zinc-finger fold. An interaction with ZBTB16 region spans residues 132-628 (AVRAEPLLLV…GDREPLLQEE (497 aa)). Residues 167–409 (DTPVCLLAVL…RCPGYWSEGR (243 aa)) enclose the GB1/RHD3-type G domain. 318-319 (RD) provides a ligand contact to GTP. Transmembrane regions (helical) follow at residues 544–564 (LAAV…GVVG) and 577–597 (GMVA…GGGV).

It belongs to the TRAFAC class dynamin-like GTPase superfamily. GB1/RHD3 GTPase family. GB1 subfamily. Self-associates. Interacts with SP1 in an oxidative stress-regulated manner. Interacts with SIGMAR1 in an oxidative stress-regulated manner. Interacts with ZBTB16 (via C2H2-type zinc finger domains 1 and 2). Auto-ubiquitinated.

It localises to the membrane. The protein resides in the cytoplasm. It is found in the nucleus. The protein localises to the nuclear body. Its subcellular location is the nucleoplasm. It localises to the endosome. The protein resides in the cytoplasmic vesicle. It is found in the secretory vesicle. The protein localises to the synaptic vesicle. Its subcellular location is the postsynaptic density. It localises to the perikaryon. The protein resides in the cell projection. It is found in the neuron projection. It carries out the reaction S-ubiquitinyl-[E2 ubiquitin-conjugating enzyme]-L-cysteine + [acceptor protein]-L-lysine = [E2 ubiquitin-conjugating enzyme]-L-cysteine + N(6)-ubiquitinyl-[acceptor protein]-L-lysine.. The protein operates within protein modification; protein ubiquitination. In terms of biological role, E3 ubiquitin-protein ligase that plays an important role in neuronal differentiation, including neurogenesis and gliogenesis, during brain development. During embryonic development initiates neuronal differentiation by inducing cell cycle arrest at the G0/G1 phase through up-regulation of cell-cycle regulatory proteins. Plays a role not only in the fetal period during the development of the nervous system, but also in the adult brain, where it is involved in the maintenance of neural functions and protection of the nervous tissue cells from oxidative stress-induced damage. Exhibits GTPase and E3 ubiquitin-protein ligase activities. Regulates dendritic spine density and synaptic neurotransmission; its ability to hydrolyze GTP is involved in the maintenance of dendritic spine density. In Bos taurus (Bovine), this protein is RING finger protein 112 (RNF112).